Here is a 195-residue protein sequence, read N- to C-terminus: Imidazoleglycerol-phosphate dehydratase (195 aa).

The protein belongs to the imidazoleglycerol-phosphate dehydratase family.

The protein localises to the cytoplasm. The enzyme catalyses D-erythro-1-(imidazol-4-yl)glycerol 3-phosphate = 3-(imidazol-4-yl)-2-oxopropyl phosphate + H2O. It participates in amino-acid biosynthesis; L-histidine biosynthesis; L-histidine from 5-phospho-alpha-D-ribose 1-diphosphate: step 6/9. The sequence is that of Imidazoleglycerol-phosphate dehydratase from Burkholderia multivorans (strain ATCC 17616 / 249).